The chain runs to 315 residues: GTP cyclohydrolase MptA (315 aa).

Belongs to the GTP cyclohydrolase IV family. In terms of assembly, homodimer. Fe(2+) serves as cofactor.

It catalyses the reaction GTP + H2O = 7,8-dihydroneopterin 2',3'-cyclic phosphate + formate + diphosphate + H(+). Its pathway is cofactor biosynthesis; 5,6,7,8-tetrahydromethanopterin biosynthesis. Converts GTP to 7,8-dihydro-D-neopterin 2',3'-cyclic phosphate, the first intermediate in the biosynthesis of coenzyme methanopterin. The chain is GTP cyclohydrolase MptA from Methanococcus maripaludis (strain C7 / ATCC BAA-1331).